Reading from the N-terminus, the 1967-residue chain is RNA replication polyprotein (1967 aa).

The Alphavirus-like MT domain occupies 63–252 (SPYAGFPHSH…YEQPLSGGYL (190 aa)). The region spanning 750–841 (TYDCMLAQRY…RVSYTFRRLA (92 aa)) is the Fe2OG dioxygenase domain. His768, Asp770, and His823 together coordinate Fe cation. Residue Arg832 participates in 2-oxoglutarate binding. An OTU domain is found at 884–991 (FNVQCVPGDG…GSHFEPLEPK (108 aa)). In terms of domain architecture, Peptidase C23 spans 990 to 1080 (PKEMCVVKAI…MTTDHLSYDG (91 aa)). Residues Cys994 and His1075 contribute to the active site. The 176-residue stretch at 1133–1308 (GSTGVMCSEL…DGIEYKFNIL (176 aa)) folds into the (+)RNA virus helicase ATP-binding domain. 1166-1173 (GTFGCGKS) is an ATP binding site. The (+)RNA virus helicase C-terminal domain occupies 1309–1455 (SRRFQSSLFR…SARQEDLRRM (147 aa)). A RdRp catalytic domain is found at 1748–1855 (GVCTESDYEA…NGRLHVSSKH (108 aa)).

Belongs to the potexviruses/carlaviruses RNA replication protein family. It depends on Fe(2+) as a cofactor. Post-translationally, specific enzymatic cleavages by the viral protease yield mature proteins.

The enzyme catalyses ATP + H2O = ADP + phosphate + H(+). It carries out the reaction RNA(n) + a ribonucleoside 5'-triphosphate = RNA(n+1) + diphosphate. Functionally, RNA-directed RNA polymerase involved in viral RNA replication. In terms of biological role, protease: Thiol protease that cleaves the polyprotein. The polypeptide is RNA replication polyprotein (Vaccinium corymbosum (Highbush blueberry)).